A 559-amino-acid polypeptide reads, in one-letter code: Putative protease Do-like 3, mitochondrial (559 aa).

A mitochondrion-targeting transit peptide spans 1 to 48 (MSFLCVRTVSRFRSLSRALAPGFLLLHGNAVPKTAVFFRQQSSNTRLF). The interval 59–81 (ENNSKSALKNKLPPGKEVSSKDA) is disordered. Positions 100-292 (VFTVSSKPRL…FLNAIEESGE (193 aa)) are serine protease. Catalysis depends on charge relay system residues His138, Asp169, and Ser247. The PDZ domain occupies 300-380 (NLTYQKMDND…HLVSMKKPCE (81 aa)). The disordered stretch occupies residues 538–559 (SEDLQPKQQNKRSKVPPKSKEH). The span at 546-559 (QNKRSKVPPKSKEH) shows a compositional bias: basic residues.

Belongs to the peptidase S1C family.

It localises to the mitochondrion matrix. Functionally, putative serine protease. This Arabidopsis thaliana (Mouse-ear cress) protein is Putative protease Do-like 3, mitochondrial (DEGP3).